The chain runs to 318 residues: Methionyl-tRNA formyltransferase (318 aa).

Position 114–117 (114–117 (SLLP)) interacts with (6S)-5,6,7,8-tetrahydrofolate.

This sequence belongs to the Fmt family.

The enzyme catalyses L-methionyl-tRNA(fMet) + (6R)-10-formyltetrahydrofolate = N-formyl-L-methionyl-tRNA(fMet) + (6S)-5,6,7,8-tetrahydrofolate + H(+). In terms of biological role, attaches a formyl group to the free amino group of methionyl-tRNA(fMet). The formyl group appears to play a dual role in the initiator identity of N-formylmethionyl-tRNA by promoting its recognition by IF2 and preventing the misappropriation of this tRNA by the elongation apparatus. This is Methionyl-tRNA formyltransferase from Protochlamydia amoebophila (strain UWE25).